The chain runs to 374 residues: Translocating chain-associated membrane protein 1 (374 aa).

Residues 1–29 (MAIRKKSSKNPPVLSHEFVLQNHADIVSC) are Cytoplasmic-facing. Residues 30 to 50 (VAMVFLLGLMFEITAKVSIIF) traverse the membrane as a helical segment. Topologically, residues 51 to 81 (VTLQYNVTLPATEEQATESAFLYYYGIKDLA) are lumenal. The N-linked (GlcNAc...) asparagine glycan is linked to N56. The helical transmembrane segment at 82–102 (TVFFYMLVAIIIHAIIQEYVL) threads the bilayer. At 103–121 (DKINRRMHFSKTKHSKFNE) the chain is on the cytoplasmic side. A TLC domain is found at 117–326 (SKFNESGQLS…NFQLRRWREH (210 aa)). A helical transmembrane segment spans residues 122–142 (SGQLSAFYLFSCIWGTFILIS). At 143–159 (ENYISDPTILWRAYPHN) the chain is on the lumenal side. A helical membrane pass occupies residues 160–180 (LMTFQMKFFYISQLAYWFHAF). The Cytoplasmic segment spans residues 181–192 (PELYFQKTKKED). Residues 193 to 213 (IPRQLVYIGLYLFHIAGAYLL) form a helical membrane-spanning segment. Position 214 (N214) is a topological domain, lumenal. Residues 215–235 (LNHLGLVLLVLHYFVEFLFHI) traverse the membrane as a helical segment. Residues 236 to 251 (SRLFYFSDEKYQKGFS) are Cytoplasmic-facing. The helical transmembrane segment at 252-272 (LWAVLFVLGRLLTLILSVLTV) threads the bilayer. The Lumenal portion of the chain corresponds to 273-297 (GFGLARAENQKLDFSTGNFNVLAVR). A helical transmembrane segment spans residues 298–318 (IAVLASICITQAFMMWKFINF). Residues 319–374 (QLRRWREHSAFQAPAVKKKPPVTKGRSSRKGTENGVNGTVTSNGADSPRNRKEKSS) are Cytoplasmic-facing. Positions 331 to 374 (APAVKKKPPVTKGRSSRKGTENGVNGTVTSNGADSPRNRKEKSS) are disordered. Over residues 334 to 347 (VKKKPPVTKGRSSR) the composition is skewed to basic residues. Residues 352–363 (NGVNGTVTSNGA) are compositionally biased toward polar residues. S365 bears the Phosphoserine mark.

The protein belongs to the TRAM family. As to quaternary structure, interacts with SEC61B. May interact with Derlin-1/DERL1. In terms of processing, N-glycosylated.

It localises to the endoplasmic reticulum membrane. In terms of biological role, involved in the translocation of nascent protein chains into or through the endoplasmic reticulum (ER) membrane by facilitating the proper chain positioning at the SEC61 channel. Regulates the exposure of nascent secretory protein chain to the cytosol during translocation into the ER. May affect the phospholipid bilayer in the vicinity of the lateral gate of the SEC61 channel, thereby facilitating ER protein transport. Intimately associates with transmembrane (TM) domain of nascent membrane proteins during the entire integration process into the ER membrane. Associates with the second TM domain of G-protein-coupled receptor opsin/OPSD nascent chain in the ER membrane, which may facilitate its integration into the membrane. Under conditions of ER stress, participates in the disposal of misfolded ER membrane proteins during the unfolded protein response (UPR), an integrated stress response (ISR) pathway, by selectively retrotranslocating misfolded ER-membrane proteins from the ER into the cytosol where they are ubiquitinated and degraded by the proteasome. In Bos taurus (Bovine), this protein is Translocating chain-associated membrane protein 1 (TRAM1).